Here is a 165-residue protein sequence, read N- to C-terminus: Large ribosomal subunit protein uL10 (165 aa).

The protein belongs to the universal ribosomal protein uL10 family. In terms of assembly, part of the ribosomal stalk of the 50S ribosomal subunit. The N-terminus interacts with L11 and the large rRNA to form the base of the stalk. The C-terminus forms an elongated spine to which L12 dimers bind in a sequential fashion forming a multimeric L10(L12)X complex.

In terms of biological role, forms part of the ribosomal stalk, playing a central role in the interaction of the ribosome with GTP-bound translation factors. The polypeptide is Large ribosomal subunit protein uL10 (Salmonella agona (strain SL483)).